The sequence spans 689 residues: Methionine--tRNA ligase (689 aa).

The short motif at 15-25 is the 'HIGH' region element; the sequence is PYANGPIHLGH. The Zn(2+) site is built by cysteine 146, cysteine 149, cysteine 159, and cysteine 162. Positions 332 to 336 match the 'KMSKS' region motif; it reads KMSKS. An ATP-binding site is contributed by lysine 335. In terms of domain architecture, tRNA-binding spans 588-689; that stretch reads DFAKIDLRIA…EGAQPGMRVK (102 aa).

The protein belongs to the class-I aminoacyl-tRNA synthetase family. MetG type 1 subfamily. In terms of assembly, homodimer. The cofactor is Zn(2+).

It localises to the cytoplasm. It catalyses the reaction tRNA(Met) + L-methionine + ATP = L-methionyl-tRNA(Met) + AMP + diphosphate. Is required not only for elongation of protein synthesis but also for the initiation of all mRNA translation through initiator tRNA(fMet) aminoacylation. This Shewanella sp. (strain W3-18-1) protein is Methionine--tRNA ligase.